Here is a 359-residue protein sequence, read N- to C-terminus: Dual-specificity RNA methyltransferase RlmN (359 aa).

Glu-86 serves as the catalytic Proton acceptor. Positions 105 to 338 (EGEKYTICVS…CTIRESKGID (234 aa)) constitute a Radical SAM core domain. Cysteines 112 and 343 form a disulfide. The [4Fe-4S] cluster site is built by Cys-119, Cys-123, and Cys-126. S-adenosyl-L-methionine contacts are provided by residues 169–170 (GE), Ser-201, 224–226 (SLH), and Asn-300. Residue Cys-343 is the S-methylcysteine intermediate of the active site.

It belongs to the radical SAM superfamily. RlmN family. [4Fe-4S] cluster is required as a cofactor.

Its subcellular location is the cytoplasm. It carries out the reaction adenosine(2503) in 23S rRNA + 2 reduced [2Fe-2S]-[ferredoxin] + 2 S-adenosyl-L-methionine = 2-methyladenosine(2503) in 23S rRNA + 5'-deoxyadenosine + L-methionine + 2 oxidized [2Fe-2S]-[ferredoxin] + S-adenosyl-L-homocysteine. The enzyme catalyses adenosine(37) in tRNA + 2 reduced [2Fe-2S]-[ferredoxin] + 2 S-adenosyl-L-methionine = 2-methyladenosine(37) in tRNA + 5'-deoxyadenosine + L-methionine + 2 oxidized [2Fe-2S]-[ferredoxin] + S-adenosyl-L-homocysteine. In terms of biological role, specifically methylates position 2 of adenine 2503 in 23S rRNA and position 2 of adenine 37 in tRNAs. m2A2503 modification seems to play a crucial role in the proofreading step occurring at the peptidyl transferase center and thus would serve to optimize ribosomal fidelity. The protein is Dual-specificity RNA methyltransferase RlmN of Wolinella succinogenes (strain ATCC 29543 / DSM 1740 / CCUG 13145 / JCM 31913 / LMG 7466 / NCTC 11488 / FDC 602W) (Vibrio succinogenes).